A 159-amino-acid chain; its full sequence is 3-hydroxyacyl-[acyl-carrier-protein] dehydratase FabZ (159 aa).

Residue histidine 58 is part of the active site.

This sequence belongs to the thioester dehydratase family. FabZ subfamily.

The protein localises to the cytoplasm. The enzyme catalyses a (3R)-hydroxyacyl-[ACP] = a (2E)-enoyl-[ACP] + H2O. Functionally, involved in unsaturated fatty acids biosynthesis. Catalyzes the dehydration of short chain beta-hydroxyacyl-ACPs and long chain saturated and unsaturated beta-hydroxyacyl-ACPs. In Helicobacter pylori (strain Shi470), this protein is 3-hydroxyacyl-[acyl-carrier-protein] dehydratase FabZ.